Consider the following 484-residue polypeptide: Cobyric acid synthase (484 aa).

In terms of domain architecture, GATase cobBQ-type spans 253–430 (SLRVAVVRFP…WHGAFEHDEF (178 aa)). C334 serves as the catalytic Nucleophile. Residue H422 is part of the active site.

It belongs to the CobB/CobQ family. CobQ subfamily.

It participates in cofactor biosynthesis; adenosylcobalamin biosynthesis. Its function is as follows. Catalyzes amidations at positions B, D, E, and G on adenosylcobyrinic A,C-diamide. NH(2) groups are provided by glutamine, and one molecule of ATP is hydrogenolyzed for each amidation. The chain is Cobyric acid synthase from Cutibacterium acnes (strain DSM 16379 / KPA171202) (Propionibacterium acnes).